Consider the following 502-residue polypeptide: Galactose/methyl galactoside import ATP-binding protein MglA (502 aa).

2 ABC transporter domains span residues 10–245 (LEMT…VGRE) and 255–502 (NEPK…SRYL). 42 to 49 (GENGAGKS) contributes to the ATP binding site.

It belongs to the ABC transporter superfamily. Galactose/methyl galactoside importer (TC 3.A.1.2.3) family. In terms of assembly, the complex is composed of one ATP-binding protein (MglA), two transmembrane proteins (MglC) and a solute-binding protein (MglB).

It localises to the cell inner membrane. It carries out the reaction D-galactose(out) + ATP + H2O = D-galactose(in) + ADP + phosphate + H(+). The catalysed reaction is methyl beta-D-galactoside(out) + ATP + H2O = methyl beta-D-galactoside(in) + ADP + phosphate + H(+). Functionally, part of the ABC transporter complex MglABC involved in galactose/methyl galactoside import. Responsible for energy coupling to the transport system. The chain is Galactose/methyl galactoside import ATP-binding protein MglA from Vibrio cholerae serotype O1 (strain ATCC 39315 / El Tor Inaba N16961).